Here is a 352-residue protein sequence, read N- to C-terminus: Small ribosomal subunit biogenesis GTPase RsgA (352 aa).

Basic residues predominate over residues 1 to 15 (MTKRKLTQNQKRRIH). A disordered region spans residues 1-26 (MTKRKLTQNQKRRIHSNNVKALDRHH). The region spanning 106 to 274 (ENEIARPDYY…LIDSPGIREF (169 aa)) is the CP-type G domain. GTP contacts are provided by residues 162 to 165 (NKVD) and 216 to 224 (GQSGVGKSS). Cysteine 298, cysteine 303, histidine 305, and cysteine 311 together coordinate Zn(2+).

It belongs to the TRAFAC class YlqF/YawG GTPase family. RsgA subfamily. Monomer. Associates with 30S ribosomal subunit, binds 16S rRNA. The cofactor is Zn(2+).

It is found in the cytoplasm. Functionally, one of several proteins that assist in the late maturation steps of the functional core of the 30S ribosomal subunit. Helps release RbfA from mature subunits. May play a role in the assembly of ribosomal proteins into the subunit. Circularly permuted GTPase that catalyzes slow GTP hydrolysis, GTPase activity is stimulated by the 30S ribosomal subunit. The protein is Small ribosomal subunit biogenesis GTPase RsgA of Mannheimia succiniciproducens (strain KCTC 0769BP / MBEL55E).